The chain runs to 279 residues: Diaminopimelate epimerase (279 aa).

Residues asparagine 13 and asparagine 66 each coordinate substrate. Cysteine 75 serves as the catalytic Proton donor. Residues glycine 76–asparagine 77, asparagine 164, asparagine 197, and glutamate 215–arginine 216 contribute to the substrate site. Cysteine 224 functions as the Proton acceptor in the catalytic mechanism. Glycine 225–threonine 226 is a binding site for substrate.

Belongs to the diaminopimelate epimerase family. In terms of assembly, homodimer.

It is found in the cytoplasm. It carries out the reaction (2S,6S)-2,6-diaminopimelate = meso-2,6-diaminopimelate. It participates in amino-acid biosynthesis; L-lysine biosynthesis via DAP pathway; DL-2,6-diaminopimelate from LL-2,6-diaminopimelate: step 1/1. In terms of biological role, catalyzes the stereoinversion of LL-2,6-diaminopimelate (L,L-DAP) to meso-diaminopimelate (meso-DAP), a precursor of L-lysine and an essential component of the bacterial peptidoglycan. This Brachyspira hyodysenteriae (strain ATCC 49526 / WA1) protein is Diaminopimelate epimerase.